Here is a 454-residue protein sequence, read N- to C-terminus: Bifunctional protein GlmU (454 aa).

A pyrophosphorylase region spans residues 1 to 226 (MALNVVILAA…AIEVEGANNR (226 aa)). Residues 8 to 11 (LAAG), Lys22, Gln73, 78 to 79 (GT), 100 to 102 (YGD), Gly137, Glu151, Asn166, and Asn224 each bind UDP-N-acetyl-alpha-D-glucosamine. Asp102 provides a ligand contact to Mg(2+). Asn224 contributes to the Mg(2+) binding site. A linker region spans residues 227–247 (VQLAQLERAYQARAAEKLMLE). An N-acetyltransferase region spans residues 248-454 (GANLRDPARI…GWTRPVKQKK (207 aa)). Positions 330 and 348 each coordinate UDP-N-acetyl-alpha-D-glucosamine. The Proton acceptor role is filled by His360. UDP-N-acetyl-alpha-D-glucosamine-binding residues include Tyr363 and Asn374. Residues Ala377, 383-384 (NY), Ser402, Ala420, and Arg437 each bind acetyl-CoA.

In the N-terminal section; belongs to the N-acetylglucosamine-1-phosphate uridyltransferase family. The protein in the C-terminal section; belongs to the transferase hexapeptide repeat family. As to quaternary structure, homotrimer. Mg(2+) serves as cofactor.

Its subcellular location is the cytoplasm. It catalyses the reaction alpha-D-glucosamine 1-phosphate + acetyl-CoA = N-acetyl-alpha-D-glucosamine 1-phosphate + CoA + H(+). The catalysed reaction is N-acetyl-alpha-D-glucosamine 1-phosphate + UTP + H(+) = UDP-N-acetyl-alpha-D-glucosamine + diphosphate. It participates in nucleotide-sugar biosynthesis; UDP-N-acetyl-alpha-D-glucosamine biosynthesis; N-acetyl-alpha-D-glucosamine 1-phosphate from alpha-D-glucosamine 6-phosphate (route II): step 2/2. It functions in the pathway nucleotide-sugar biosynthesis; UDP-N-acetyl-alpha-D-glucosamine biosynthesis; UDP-N-acetyl-alpha-D-glucosamine from N-acetyl-alpha-D-glucosamine 1-phosphate: step 1/1. The protein operates within bacterial outer membrane biogenesis; LPS lipid A biosynthesis. Its function is as follows. Catalyzes the last two sequential reactions in the de novo biosynthetic pathway for UDP-N-acetylglucosamine (UDP-GlcNAc). The C-terminal domain catalyzes the transfer of acetyl group from acetyl coenzyme A to glucosamine-1-phosphate (GlcN-1-P) to produce N-acetylglucosamine-1-phosphate (GlcNAc-1-P), which is converted into UDP-GlcNAc by the transfer of uridine 5-monophosphate (from uridine 5-triphosphate), a reaction catalyzed by the N-terminal domain. This Shewanella loihica (strain ATCC BAA-1088 / PV-4) protein is Bifunctional protein GlmU.